Here is a 298-residue protein sequence, read N- to C-terminus: Protease HtpX homolog (298 aa).

2 helical membrane passes run 15 to 35 (YVMI…GYVF) and 39 to 59 (AMAG…MMIA). His143 is a binding site for Zn(2+). Residue Glu144 is part of the active site. His147 contacts Zn(2+). 2 consecutive transmembrane segments (helical) span residues 158-178 (IALA…RSFW) and 197-217 (IVMM…TTIA). Glu226 contributes to the Zn(2+) binding site.

Belongs to the peptidase M48B family. Zn(2+) serves as cofactor.

It localises to the cell membrane. In Pediococcus pentosaceus (strain ATCC 25745 / CCUG 21536 / LMG 10740 / 183-1w), this protein is Protease HtpX homolog.